The primary structure comprises 89 residues: Transcriptional regulator WhiB2 (89 aa).

Over residues 1-15 (MVPEAPAPFEEPLPP) the composition is skewed to pro residues. The segment at 1–24 (MVPEAPAPFEEPLPPEATDQWQDR) is disordered. The region spanning 26-83 (LCAQTDPEAFFPEKGGSTREAKKICMGCEVRHECLEYALAHDERFGIWGGLSERERRR) is the 4Fe-4S Wbl-type domain. C27 contributes to the [4Fe-4S] cluster binding site. S42 carries the phosphoserine modification. [4Fe-4S] cluster contacts are provided by C50, C53, and C59.

The protein belongs to the WhiB family. Requires [4Fe-4S] cluster as cofactor. Post-translationally, may be phosphorylated, possibly on Ser-42. The cluster is degraded quickly in the presence of air. Upon cluster removal intramolecular disulfide bonds are formed. In terms of processing, the Fe-S cluster can be nitrosylated by nitric oxide (NO).

It is found in the cytoplasm. Its function is as follows. Acts as a transcriptional regulator. Probably redox-responsive. The apo- but not holo-form probably binds DNA. The apo-form functions as a chaperone, preventing aggregation or helping in correct refolding of a number of substrates; this activity does not require ATP or the ability to bind a Fe-S cluster. Chaperone activity is insensitive to the redox state of its cysteine residues. The apo-form has no protein disulfide reductase activity. The apo-form binds to its own promoter. The sequence is that of Transcriptional regulator WhiB2 (whiB2) from Mycobacterium tuberculosis (strain ATCC 25618 / H37Rv).